The chain runs to 124 residues: Probable glycine cleavage system H protein (124 aa).

Positions 25–106 constitute a Lipoyl-binding domain; it reads TATIGITDYA…PYGSWLVKMA (82 aa). K66 bears the N6-lipoyllysine mark.

The protein belongs to the GcvH family. As to quaternary structure, the glycine cleavage system is composed of four proteins: P, T, L and H. (R)-lipoate is required as a cofactor.

Functionally, the glycine cleavage system catalyzes the degradation of glycine. The H protein shuttles the methylamine group of glycine from the P protein to the T protein. This chain is Probable glycine cleavage system H protein, found in Thermoplasma acidophilum (strain ATCC 25905 / DSM 1728 / JCM 9062 / NBRC 15155 / AMRC-C165).